We begin with the raw amino-acid sequence, 126 residues long: MAAAADLAQIPDVDIDSDGVFKYVLIRVHAVSPPGTPAGESKEIVRGYKWAEYHADIYDKVSGEMQKKGIDCECLGGGRISHQSQDKKIHVYGYSMGYGRAQHSISTEKIKARYPDYSVTWADDGY.

Substrate is bound at residue Lys22. The Proton acceptor role is filled by His54. 95–97 (SMG) serves as a coordination point for substrate.

This sequence belongs to the janus family. As to quaternary structure, monomer.

Its subcellular location is the cytoplasm. It carries out the reaction N(pros)-phospho-L-histidyl-[protein] + H2O = L-histidyl-[protein] + phosphate. It catalyses the reaction N(tele)-phospho-L-histidyl-[protein] + H2O = L-histidyl-[protein] + phosphate. Functionally, exhibits phosphohistidine phosphatase activity. In Sus scrofa (Pig), this protein is 14 kDa phosphohistidine phosphatase (PHPT1).